The primary structure comprises 119 residues: Large ribosomal subunit protein uL18 (119 aa).

The protein belongs to the universal ribosomal protein uL18 family. In terms of assembly, part of the 50S ribosomal subunit; part of the 5S rRNA/L5/L18/L25 subcomplex. Contacts the 5S and 23S rRNAs.

Functionally, this is one of the proteins that bind and probably mediate the attachment of the 5S RNA into the large ribosomal subunit, where it forms part of the central protuberance. The protein is Large ribosomal subunit protein uL18 of Clostridium beijerinckii (strain ATCC 51743 / NCIMB 8052) (Clostridium acetobutylicum).